A 387-amino-acid polypeptide reads, in one-letter code: uncharacterized protein (387 aa).

The helical transmembrane segment at 5-25 (FVLFSFPFLLLSSMLIFYQTT) threads the bilayer.

The protein belongs to the LicD transferase family.

It localises to the membrane. This is an uncharacterized protein from Caenorhabditis elegans.